The chain runs to 324 residues: Cytochrome f (324 aa).

Positions 1 to 30 are cleaved as a signal peptide; the sequence is MNMRFSPKALVRQLGRLSLVACLSLGLLGA. Tyr42, Cys62, Cys65, and His66 together coordinate heme. The chain crosses the membrane as a helical span at residues 290-310; the sequence is VLGVIAFFFAVMLAQIMLVLK.

Belongs to the cytochrome f family. In terms of assembly, the 4 large subunits of the cytochrome b6-f complex are cytochrome b6, subunit IV (17 kDa polypeptide, PetD), cytochrome f and the Rieske protein, while the 4 small subunits are PetG, PetL, PetM and PetN. The complex functions as a dimer. The cofactor is heme.

The protein localises to the cellular thylakoid membrane. Component of the cytochrome b6-f complex, which mediates electron transfer between photosystem II (PSII) and photosystem I (PSI), cyclic electron flow around PSI, and state transitions. In Synechococcus elongatus (strain ATCC 33912 / PCC 7942 / FACHB-805) (Anacystis nidulans R2), this protein is Cytochrome f.